A 377-amino-acid chain; its full sequence is Nucleosome assembly protein 1;3 (377 aa).

Residues 26-80 adopt a coiled-coil conformation; the sequence is VNVLKNKLQGLTGKHSNVLENLSPNVRKRVEVLREIQTQHDELEAKFFEERAALE. A Nuclear export signal motif is present at residues 47 to 62; the sequence is LSPNVRKRVEVLREIQ. The Nuclear localization signal motif lies at 223–228; the sequence is KKKPKK. Residues 298–377 form a disordered region; it reads EAAQDEDYID…GERPPECKQQ (80 aa). The segment covering 300–341 has biased composition (acidic residues); the sequence is AQDEDYIDLEDDEDEEDDEDEDEDEEDEEEEDEDEDDDDEDE. Positions 345 to 357 are enriched in basic residues; sequence KTKKKSSAGRKRS. C374 carries the cysteine methyl ester modification. C374 is lipidated: S-farnesyl cysteine. A propeptide spans 375–377 (removed in mature form); the sequence is KQQ.

This sequence belongs to the nucleosome assembly protein (NAP) family. Can form homomeric and heteromeric protein complexes with NAP1;4. Binds histones H2A and H2B in vivo. Also able to bind histones H1 and H4 in vitro. Interacts with CYCB1;1 and with alpha tubulin.

Its subcellular location is the nucleus. The protein resides in the cytoplasm. Functionally, may modulate chromatin structure by regulation of nucleosome assembly/disassembly. Could function together with B-type cyclins in the regulation of microtubule dynamics. This Nicotiana tabacum (Common tobacco) protein is Nucleosome assembly protein 1;3 (NAP1;3).